Here is a 196-residue protein sequence, read N- to C-terminus: Imidazole glycerol phosphate synthase subunit HisH (196 aa).

One can recognise a Glutamine amidotransferase type-1 domain in the interval 2–196 (KIIIINTNCS…EQLIKNFLEI (195 aa)). The active-site Nucleophile is the Cys-77. Catalysis depends on residues His-178 and Glu-180.

Heterodimer of HisH and HisF.

The protein localises to the cytoplasm. It carries out the reaction 5-[(5-phospho-1-deoxy-D-ribulos-1-ylimino)methylamino]-1-(5-phospho-beta-D-ribosyl)imidazole-4-carboxamide + L-glutamine = D-erythro-1-(imidazol-4-yl)glycerol 3-phosphate + 5-amino-1-(5-phospho-beta-D-ribosyl)imidazole-4-carboxamide + L-glutamate + H(+). The enzyme catalyses L-glutamine + H2O = L-glutamate + NH4(+). It functions in the pathway amino-acid biosynthesis; L-histidine biosynthesis; L-histidine from 5-phospho-alpha-D-ribose 1-diphosphate: step 5/9. In terms of biological role, IGPS catalyzes the conversion of PRFAR and glutamine to IGP, AICAR and glutamate. The HisH subunit catalyzes the hydrolysis of glutamine to glutamate and ammonia as part of the synthesis of IGP and AICAR. The resulting ammonia molecule is channeled to the active site of HisF. In Blochmanniella floridana, this protein is Imidazole glycerol phosphate synthase subunit HisH.